A 141-amino-acid chain; its full sequence is Hemoglobin subunit alpha-A (141 aa).

In terms of domain architecture, Globin spans 1–141; that stretch reads MLSASDKANV…VGLVLTAKYR (141 aa). Histidine 58 serves as a coordination point for O2. Histidine 87 is a binding site for heme b.

Belongs to the globin family. As to quaternary structure, there are three forms of hemoglobin in Sphenodon: A, A' and D. Hb A is a tetramer of two alpha-A and two beta-1, Hb A' is a tetramer of two alpha-a and two beta-2, Hb D is a tetramer of two alpha-D and two beta-2. Red blood cells.

Involved in oxygen transport from the lung to the various peripheral tissues. This chain is Hemoglobin subunit alpha-A (HBAA), found in Sphenodon punctatus (Tuatara).